The sequence spans 268 residues: Eukaryotic translation initiation factor 2 subunit beta (268 aa).

Residues 1–12 (MADEINEIREEQ) are compositionally biased toward basic and acidic residues. The tract at residues 1 to 85 (MADEINEIRE…LNNESVDAGE (85 aa)) is disordered. A2 is subject to N-acetylalanine. S42, S80, and S112 each carry phosphoserine; by CK2. The segment at 222-246 (CLGCKSPDTILSKENRLFFLRCEKC) adopts a C4-type zinc-finger fold.

This sequence belongs to the eIF-2-beta/eIF-5 family. As to quaternary structure, eukaryotic translation initiation factor 2 eIF2 is a heterotrimeric complex composed of an alpha, a beta and a gamma subunit. In terms of processing, phosphorylated at Ser-42, Ser-80 and Ser-112 by CK2.

It is found in the cytoplasm. Its subcellular location is the cytosol. Functionally, component of the eIF2 complex that functions in the early steps of protein synthesis by forming a ternary complex with GTP and initiator tRNA. This complex binds to a 40S ribosomal subunit, followed by mRNA binding to form a 43S pre-initiation complex (43S PIC). Junction of the 60S ribosomal subunit to form the 80S initiation complex is preceded by hydrolysis of the GTP bound to eIF2 and release of an eIF2-GDP binary complex. In order for eIF2 to recycle and catalyze another round of initiation, the GDP bound to eIF2 must exchange with GTP by way of a reaction catalyzed by eIF2B. This chain is Eukaryotic translation initiation factor 2 subunit beta, found in Arabidopsis thaliana (Mouse-ear cress).